The chain runs to 369 residues: Glutamate 5-kinase (369 aa).

ATP is bound at residue Lys8. Residues Ser49, Asp136, and Asn148 each contribute to the substrate site. ATP is bound by residues 168 to 169 (TD) and 211 to 217 (TGGMATK). One can recognise a PUA domain in the interval 276–354 (TGKLYLDSGA…DEISQILGYG (79 aa)).

Belongs to the glutamate 5-kinase family.

The protein localises to the cytoplasm. The catalysed reaction is L-glutamate + ATP = L-glutamyl 5-phosphate + ADP. Its pathway is amino-acid biosynthesis; L-proline biosynthesis; L-glutamate 5-semialdehyde from L-glutamate: step 1/2. In terms of biological role, catalyzes the transfer of a phosphate group to glutamate to form L-glutamate 5-phosphate. This Rippkaea orientalis (strain PCC 8801 / RF-1) (Cyanothece sp. (strain PCC 8801)) protein is Glutamate 5-kinase.